The chain runs to 122 residues: Large ribosomal subunit protein uL14 (122 aa).

It belongs to the universal ribosomal protein uL14 family. As to quaternary structure, part of the 50S ribosomal subunit. Forms a cluster with proteins L3 and L19. In the 70S ribosome, L14 and L19 interact and together make contacts with the 16S rRNA in bridges B5 and B8.

Its function is as follows. Binds to 23S rRNA. Forms part of two intersubunit bridges in the 70S ribosome. This Syntrophotalea carbinolica (strain DSM 2380 / NBRC 103641 / GraBd1) (Pelobacter carbinolicus) protein is Large ribosomal subunit protein uL14.